A 590-amino-acid polypeptide reads, in one-letter code: UvrABC system protein C (590 aa).

Residues 14 to 91 (DQPGCYLMKD…IKKYDPKYNV (78 aa)) enclose the GIY-YIG domain. The region spanning 196–231 (NEIKKELEAKMAEAAEKLEFERAKEFRDQLAHIEST) is the UVR domain.

This sequence belongs to the UvrC family. Interacts with UvrB in an incision complex.

The protein localises to the cytoplasm. Functionally, the UvrABC repair system catalyzes the recognition and processing of DNA lesions. UvrC both incises the 5' and 3' sides of the lesion. The N-terminal half is responsible for the 3' incision and the C-terminal half is responsible for the 5' incision. This Bacillus velezensis (strain DSM 23117 / BGSC 10A6 / LMG 26770 / FZB42) (Bacillus amyloliquefaciens subsp. plantarum) protein is UvrABC system protein C.